Consider the following 1070-residue polypeptide: Phosphatidylinositol 4,5-bisphosphate 3-kinase catalytic subunit beta isoform (1070 aa).

The 90-residue stretch at 26-115 (SDGSISVDFL…LPVLKLVTRS (90 aa)) folds into the PI3K-ABD domain. Residues 194-285 (GGKLVVAVHF…RTLPHFILVE (92 aa)) form the PI3K-RBD domain. Position 324 is a phosphoserine (serine 324). A C2 PI3K-type domain is found at 327 to 496 (WGNNNPFQIV…NATALHIKFP (170 aa)). The short motif at 410–418 (KVKTKKSTK) is the Nuclear localization signal (NLS) element. The PIK helical domain maps to 524–701 (ANVSSRGGKK…GVILEAYCRG (178 aa)). Residues 772–1053 (YVEKCRYMDS…KFDEALRESW (282 aa)) form the PI3K/PI4K catalytic domain. Residues 778–784 (YMDSKMK) form a G-loop region. A catalytic loop region spans residues 916-924 (GIGDRHSDN). The tract at residues 935–961 (HIDFGHILGNFKSKFGIKRERVPFILT) is activation loop. At serine 1070 the chain carries Phosphoserine; by autocatalysis.

This sequence belongs to the PI3/PI4-kinase family. As to quaternary structure, heterodimer of a catalytic subunit PIK3CB and a p85 regulatory subunit (PIK3R1, PIK3R2 or PIK3R3). Interaction with PIK3R2 is required for nuclear localization and nuclear export. Part of a complex with PIK3R1 and PTEN. Binding to PTEN may antagonize the lipid kinase activity under normal growth conditions. Part of a complex involved in autophagosome formation composed of PIK3C3 and PIK3R4. Interacts with BECN1, ATG14 and RAB5A. Autophosphorylation at Ser-1070 negatively regulates the phosphatidylinositol-4,5-bisphosphate 3-kinase activity.

It localises to the cytoplasm. The protein localises to the nucleus. The catalysed reaction is a 1,2-diacyl-sn-glycero-3-phospho-(1D-myo-inositol-4,5-bisphosphate) + ATP = a 1,2-diacyl-sn-glycero-3-phospho-(1D-myo-inositol-3,4,5-trisphosphate) + ADP + H(+). It catalyses the reaction 1-octadecanoyl-2-(5Z,8Z,11Z,14Z)-eicosatetraenoyl-sn-glycero-3-phospho-1D-myo-inositol 4,5-bisphosphate + ATP = 1-octadecanoyl-2-(5Z,8Z,11Z,14Z-eicosatetraenoyl)-sn-glycero-3-phospho-(1D-myo-inositol 3,4,5-triphosphate) + ADP + H(+). The enzyme catalyses L-seryl-[protein] + ATP = O-phospho-L-seryl-[protein] + ADP + H(+). Its pathway is phospholipid metabolism; phosphatidylinositol phosphate biosynthesis. In terms of biological role, phosphoinositide-3-kinase (PI3K) phosphorylates phosphatidylinositol (PI) derivatives at position 3 of the inositol ring to produce 3-phosphoinositides. Uses ATP and PtdIns(4,5)P2 (phosphatidylinositol 4,5-bisphosphate) to generate phosphatidylinositol 3,4,5-trisphosphate (PIP3). PIP3 plays a key role by recruiting PH domain-containing proteins to the membrane, including AKT1 and PDPK1, activating signaling cascades involved in cell growth, survival, proliferation, motility and morphology. Involved in the activation of AKT1 upon stimulation by G-protein coupled receptors (GPCRs) ligands such as CXCL12, sphingosine 1-phosphate, and lysophosphatidic acid. May also act downstream receptor tyrosine kinases. Required in different signaling pathways for stable platelet adhesion and aggregation. Plays a role in platelet activation signaling triggered by GPCRs, alpha-IIb/beta-3 integrins (ITGA2B/ ITGB3) and ITAM (immunoreceptor tyrosine-based activation motif)-bearing receptors such as GP6. Regulates the strength of adhesion of ITGA2B/ ITGB3 activated receptors necessary for the cellular transmission of contractile forces. Required for platelet aggregation induced by F2 (thrombin) and thromboxane A2 (TXA2). Has a role in cell survival. May have a role in cell migration. Involved in the early stage of autophagosome formation. Modulates the intracellular level of PtdIns3P (phosphatidylinositol 3-phosphate) and activates PIK3C3 kinase activity. May act as a scaffold, independently of its lipid kinase activity to positively regulate autophagy. May have a role in insulin signaling as scaffolding protein in which the lipid kinase activity is not required. May have a kinase-independent function in regulating cell proliferation and in clathrin-mediated endocytosis. Mediator of oncogenic signal in cell lines lacking PTEN. The lipid kinase activity is necessary for its role in oncogenic transformation. Required for the growth of ERBB2 and RAS driven tumors. Also has a protein kinase activity showing autophosphorylation. The chain is Phosphatidylinositol 4,5-bisphosphate 3-kinase catalytic subunit beta isoform (Pik3cb) from Rattus norvegicus (Rat).